Consider the following 928-residue polypeptide: Probable outer membrane protein pmp11 (928 aa).

Positions 1 to 24 (MKTSIPWVLVSSVLAFSCHLQSLA) are cleaved as a signal peptide. In terms of domain architecture, Autotransporter spans 627–928 (GMEHKQGFWV…NVDVGTKLRF (302 aa)).

This sequence belongs to the PMP outer membrane protein family.

Its subcellular location is the secreted. It localises to the cell wall. It is found in the cell outer membrane. The polypeptide is Probable outer membrane protein pmp11 (pmp11) (Chlamydia pneumoniae (Chlamydophila pneumoniae)).